The chain runs to 338 residues: Fructose-1,6-bisphosphatase 1 (338 aa).

N-acetylthreonine is present on T2. AMP-binding positions include 18–22 (VMEEG) and 28–32 (TGEMT). Residues D69 and E98 each coordinate Mg(2+). 113–114 (KY) lines the AMP pocket. The Mg(2+) site is built by D119, L121, and D122. Position 122 to 125 (122 to 125 (DGSS)) interacts with substrate. R141 provides a ligand contact to AMP. At K151 the chain carries N6-succinyllysine. S208 carries the phosphoserine; by PKA modification. Substrate contacts are provided by residues 213 to 216 (NEGY), 244 to 249 (RYVGSM), Y265, and 275 to 277 (KLR). Y216, Y245, and Y265 each carry phosphotyrosine. E281 is a Mg(2+) binding site.

It belongs to the FBPase class 1 family. As to quaternary structure, homotetramer. Mg(2+) serves as cofactor.

It catalyses the reaction beta-D-fructose 1,6-bisphosphate + H2O = beta-D-fructose 6-phosphate + phosphate. It participates in carbohydrate biosynthesis; gluconeogenesis. With respect to regulation, subject to complex allosteric regulation. The enzyme can assume an active R-state, or an inactive T-state. Intermediate conformations may exist. AMP acts as an allosteric inhibitor. AMP binding affects the turnover of bound substrate and not the affinity for substrate. Fructose 2,6-bisphosphate acts as a competitive inhibitor. Fructose 2,6-bisphosphate and AMP have synergistic effects. In terms of biological role, catalyzes the hydrolysis of fructose 1,6-bisphosphate to fructose 6-phosphate in the presence of divalent cations, acting as a rate-limiting enzyme in gluconeogenesis. Plays a role in regulating glucose sensing and insulin secretion of pancreatic beta-cells. Appears to modulate glycerol gluconeogenesis in liver. Important regulator of appetite and adiposity; increased expression of the protein in liver after nutrient excess increases circulating satiety hormones and reduces appetite-stimulating neuropeptides and thus seems to provide a feedback mechanism to limit weight gain. In Sus scrofa (Pig), this protein is Fructose-1,6-bisphosphatase 1 (FBP1).